The sequence spans 270 residues: Orotidine 5'-phosphate decarboxylase (270 aa).

Catalysis depends on K89, which acts as the Proton donor.

This sequence belongs to the OMP decarboxylase family. Type 2 subfamily.

It carries out the reaction orotidine 5'-phosphate + H(+) = UMP + CO2. It functions in the pathway pyrimidine metabolism; UMP biosynthesis via de novo pathway; UMP from orotate: step 2/2. The sequence is that of Orotidine 5'-phosphate decarboxylase from Dehalococcoides mccartyi (strain CBDB1).